The following is a 340-amino-acid chain: Glyceraldehyde-3-phosphate dehydrogenase (340 aa).

NAD(+) contacts are provided by residues 11-12 (SI) and G111. 140–142 (SCN) provides a ligand contact to D-glyceraldehyde 3-phosphate. The active-site Nucleophile is the C141. R169 contributes to the NAD(+) binding site. 195–196 (HG) contributes to the D-glyceraldehyde 3-phosphate binding site. Residue Q303 coordinates NAD(+).

It belongs to the glyceraldehyde-3-phosphate dehydrogenase family. Homotetramer.

The protein localises to the cytoplasm. The catalysed reaction is D-glyceraldehyde 3-phosphate + phosphate + NADP(+) = (2R)-3-phospho-glyceroyl phosphate + NADPH + H(+). It carries out the reaction D-glyceraldehyde 3-phosphate + phosphate + NAD(+) = (2R)-3-phospho-glyceroyl phosphate + NADH + H(+). Its pathway is carbohydrate degradation; glycolysis; pyruvate from D-glyceraldehyde 3-phosphate: step 1/5. The chain is Glyceraldehyde-3-phosphate dehydrogenase from Methanococcus maripaludis (strain C5 / ATCC BAA-1333).